Consider the following 501-residue polypeptide: Aldehyde dehydrogenase 1A1 (501 aa).

An N-acetylserine modification is found at serine 2. An N6-acetyllysine mark is found at lysine 91 and lysine 128. Residues isoleucine 167 to asparagine 170, lysine 193 to glutamate 196, glycine 226 to proline 227, and glycine 246 to serine 247 contribute to the NAD(+) site. Lysine 252 bears the N6-acetyllysine mark. Residue glutamate 269 is the Proton acceptor of the active site. Glutamate 269–glycine 271 lines the NAD(+) pocket. The active-site Nucleophile is cysteine 303. Residues leucine 336–serine 501 are mediates interaction with PRMT3. Threonine 337 bears the Phosphothreonine mark. Position 349–353 (glutamate 349–lysine 353) interacts with NAD(+). 2 positions are modified to N6-acetyllysine: lysine 353 and lysine 367. Glutamate 400–phenylalanine 402 is an NAD(+) binding site. Lysine 410 is modified (N6-acetyllysine). Residue serine 413 is modified to Phosphoserine. 2 positions are modified to N6-acetyllysine: lysine 419 and lysine 495.

The protein belongs to the aldehyde dehydrogenase family. Homotetramer. Interacts with PRMT3; the interaction is direct, inhibits ALDH1A1 aldehyde dehydrogenase activity and is independent of the methyltransferase activity of PRMT3. Post-translationally, the N-terminus is blocked most probably by acetylation.

The protein localises to the cytoplasm. It localises to the cytosol. Its subcellular location is the cell projection. The protein resides in the axon. It catalyses the reaction an aldehyde + NAD(+) + H2O = a carboxylate + NADH + 2 H(+). The catalysed reaction is all-trans-retinal + NAD(+) + H2O = all-trans-retinoate + NADH + 2 H(+). It carries out the reaction 9-cis-retinal + NAD(+) + H2O = 9-cis-retinoate + NADH + 2 H(+). The enzyme catalyses 11-cis-retinal + NAD(+) + H2O = 11-cis-retinoate + NADH + 2 H(+). It catalyses the reaction 13-cis-retinal + NAD(+) + H2O = 13-cis-retinoate + NADH + 2 H(+). The catalysed reaction is 3-deoxyglucosone + NAD(+) + H2O = 2-dehydro-3-deoxy-D-gluconate + NADH + 2 H(+). It carries out the reaction (E)-4-hydroxynon-2-enal + NAD(+) + H2O = (E)-4-hydroxynon-2-enoate + NADH + 2 H(+). The enzyme catalyses malonaldehyde + NAD(+) + H2O = 3-oxopropanoate + NADH + 2 H(+). It catalyses the reaction hexanal + NAD(+) + H2O = hexanoate + NADH + 2 H(+). The catalysed reaction is propanal + NAD(+) + H2O = propanoate + NADH + 2 H(+). It carries out the reaction acetaldehyde + NAD(+) + H2O = acetate + NADH + 2 H(+). The enzyme catalyses benzaldehyde + NAD(+) + H2O = benzoate + NADH + 2 H(+). It catalyses the reaction 4-aminobutanal + NAD(+) + H2O = 4-aminobutanoate + NADH + 2 H(+). It functions in the pathway cofactor metabolism; retinol metabolism. Its function is as follows. Cytosolic dehydrogenase that catalyzes the irreversible oxidation of a wide range of aldehydes to their corresponding carboxylic acid. Functions downstream of retinol dehydrogenases and catalyzes the oxidation of retinaldehyde into retinoic acid, the second step in the oxidation of retinol/vitamin A into retinoic acid. This pathway is crucial to control the levels of retinol and retinoic acid, two important molecules which excess can be teratogenic and cytotoxic. Also oxidizes aldehydes resulting from lipid peroxidation like (E)-4-hydroxynon-2-enal/HNE, malonaldehyde and hexanal that form protein adducts and are highly cytotoxic. By participating for instance to the clearance of (E)-4-hydroxynon-2-enal/HNE in the lens epithelium prevents the formation of HNE-protein adducts and lens opacification. Also functions downstream of fructosamine-3-kinase in the fructosamine degradation pathway by catalyzing the oxidation of 3-deoxyglucosone, the carbohydrate product of fructosamine 3-phosphate decomposition, which is itself a potent glycating agent that may react with lysine and arginine side-chains of proteins. Also has an aminobutyraldehyde dehydrogenase activity and is probably part of an alternative pathway for the biosynthesis of GABA/4-aminobutanoate in midbrain, thereby playing a role in GABAergic synaptic transmission. The polypeptide is Aldehyde dehydrogenase 1A1 (Macaca fascicularis (Crab-eating macaque)).